A 910-amino-acid polypeptide reads, in one-letter code: Protein translocase subunit SecA (910 aa).

ATP-binding positions include glutamine 89, 107–111 (GEGKT), and aspartate 502. Zn(2+)-binding residues include cysteine 889, cysteine 891, cysteine 900, and histidine 901.

This sequence belongs to the SecA family. As to quaternary structure, monomer and homodimer. Part of the essential Sec protein translocation apparatus which comprises SecA, SecYEG and auxiliary proteins SecDF-YajC and YidC. Requires Zn(2+) as cofactor.

Its subcellular location is the cell inner membrane. The protein localises to the cytoplasm. The catalysed reaction is ATP + H2O + cellular proteinSide 1 = ADP + phosphate + cellular proteinSide 2.. In terms of biological role, part of the Sec protein translocase complex. Interacts with the SecYEG preprotein conducting channel. Has a central role in coupling the hydrolysis of ATP to the transfer of proteins into and across the cell membrane, serving both as a receptor for the preprotein-SecB complex and as an ATP-driven molecular motor driving the stepwise translocation of polypeptide chains across the membrane. This chain is Protein translocase subunit SecA, found in Bartonella bacilliformis (strain ATCC 35685 / KC583 / Herrer 020/F12,63).